Reading from the N-terminus, the 90-residue chain is Small ribosomal subunit protein uS15c (90 aa).

Belongs to the universal ribosomal protein uS15 family. Part of the 30S ribosomal subunit.

It is found in the plastid. This is Small ribosomal subunit protein uS15c (rps15) from Cuscuta reflexa (Southern Asian dodder).